The following is a 173-amino-acid chain: uncharacterized protein (173 aa).

4 consecutive transmembrane segments (helical) span residues 13–35 (LQVI…PLLS), 50–72 (IIFI…FLGL), 107–129 (NYLI…KYLL), and 139–161 (GYLI…RLIL).

It localises to the cell membrane. This is an uncharacterized protein from Rickettsia prowazekii (strain Madrid E).